Consider the following 793-residue polypeptide: Probable phosphoketolase 2 (793 aa).

This sequence belongs to the XFP family. The cofactor is thiamine diphosphate.

The chain is Probable phosphoketolase 2 from Nostoc sp. (strain PCC 7120 / SAG 25.82 / UTEX 2576).